The following is a 91-amino-acid chain: Small ribosomal subunit protein uS19 (91 aa).

This sequence belongs to the universal ribosomal protein uS19 family.

Functionally, protein S19 forms a complex with S13 that binds strongly to the 16S ribosomal RNA. The protein is Small ribosomal subunit protein uS19 of Lactobacillus delbrueckii subsp. bulgaricus (strain ATCC 11842 / DSM 20081 / BCRC 10696 / JCM 1002 / NBRC 13953 / NCIMB 11778 / NCTC 12712 / WDCM 00102 / Lb 14).